The following is a 231-amino-acid chain: MAKLTKRQKAINEKVDFNKAYGIDEAVALLKELSTVKFPETVDAAINLGIDPRKSDQAVRGATSLPHGTGKDVRVAVFTQGAAADAAKEAGAEFVGMEDLADQIKGGMMDFDVVIADPAAMRVVGALGQILGPRGLMPNPKTGTVTPDVAGAVKNAKAGQVRFRADKGGVIHGGIGKVSFELNAIKENLEALVSDLKKAKPAAAKGVYLKKISLSTTMGPGLTIDQSSLEI.

It belongs to the universal ribosomal protein uL1 family. As to quaternary structure, part of the 50S ribosomal subunit.

Functionally, binds directly to 23S rRNA. The L1 stalk is quite mobile in the ribosome, and is involved in E site tRNA release. Its function is as follows. Protein L1 is also a translational repressor protein, it controls the translation of the L11 operon by binding to its mRNA. The polypeptide is Large ribosomal subunit protein uL1 (Teredinibacter turnerae (strain ATCC 39867 / T7901)).